A 196-amino-acid chain; its full sequence is NADH-quinone oxidoreductase subunit C (196 aa).

This sequence belongs to the complex I 30 kDa subunit family. NDH-1 is composed of 14 different subunits. Subunits NuoB, C, D, E, F, and G constitute the peripheral sector of the complex.

Its subcellular location is the cell inner membrane. It carries out the reaction a quinone + NADH + 5 H(+)(in) = a quinol + NAD(+) + 4 H(+)(out). Functionally, NDH-1 shuttles electrons from NADH, via FMN and iron-sulfur (Fe-S) centers, to quinones in the respiratory chain. The immediate electron acceptor for the enzyme in this species is believed to be ubiquinone. Couples the redox reaction to proton translocation (for every two electrons transferred, four hydrogen ions are translocated across the cytoplasmic membrane), and thus conserves the redox energy in a proton gradient. The sequence is that of NADH-quinone oxidoreductase subunit C from Rickettsia bellii (strain RML369-C).